The following is a 753-amino-acid chain: Replication restart protein PriA (753 aa).

The region spanning 228 to 395 (SLITTKFQTC…LSKKYTLSVL (168 aa)) is the Helicase ATP-binding domain. Residue 241 to 248 (GVTGSGKT) participates in ATP binding. Residues 337-340 (DEEH) carry the DEAH box motif. Zn(2+) is bound by residues Cys-458, Cys-461, Cys-467, Cys-470, Cys-485, Cys-488, Cys-499, and Cys-502. The 156-residue stretch at 491 to 646 (RLSKPITSCP…DFPAFYKEEI (156 aa)) folds into the Helicase C-terminal domain.

It belongs to the helicase family. PriA subfamily. As to quaternary structure, component of the replication restart primosome. It depends on Zn(2+) as a cofactor.

The enzyme catalyses Couples ATP hydrolysis with the unwinding of duplex DNA by translocating in the 3'-5' direction.. It carries out the reaction ATP + H2O = ADP + phosphate + H(+). In terms of biological role, initiates the restart of stalled replication forks, which reloads the replicative helicase on sites other than the origin of replication. Recognizes and binds to abandoned replication forks and remodels them to uncover a helicase loading site. Promotes assembly of the primosome at these replication forks. This chain is Replication restart protein PriA, found in Chlamydia muridarum (strain MoPn / Nigg).